The sequence spans 95 residues: MAKRYGPKIEDPHDVLLYPVATEKAMRLMEAENKLTFIVRRDANKPLIKKAVEELFDVEVEKVNTLITPTGEKKAYVKLKPEYRAEDVAVDLGIL.

This sequence belongs to the universal ribosomal protein uL23 family. Part of the 50S ribosomal subunit. Contacts protein L29.

In terms of biological role, binds to 23S rRNA. One of the proteins that surrounds the polypeptide exit tunnel on the outside of the ribosome. This is Large ribosomal subunit protein uL23 from Methanopyrus kandleri (strain AV19 / DSM 6324 / JCM 9639 / NBRC 100938).